A 554-amino-acid polypeptide reads, in one-letter code: (+)-delta-cadinene synthase isozyme XC1 (554 aa).

The segment covering 1–16 (MASQVSQMPSSSPLSS) has biased composition (low complexity). The tract at residues 1-23 (MASQVSQMPSSSPLSSNKDEMRP) is disordered. Mg(2+) is bound by residues aspartate 307, aspartate 311, aspartate 451, and glutamate 455. The DDXXD motif signature appears at 307-311 (DDTYD).

It belongs to the terpene synthase family. It depends on Mg(2+) as a cofactor.

It catalyses the reaction (2E,6E)-farnesyl diphosphate = (1S,8aR)-delta-cadinene + diphosphate. It participates in secondary metabolite biosynthesis; terpenoid biosynthesis. Its function is as follows. Responsible for the cyclization of trans,trans-farnesyl diphosphate (FPP) to (+)-delta cadinene. This chain is (+)-delta-cadinene synthase isozyme XC1, found in Gossypium arboreum (Tree cotton).